Reading from the N-terminus, the 82-residue chain is ATP synthase subunit c, chloroplastic (82 aa).

2 helical membrane passes run 3-23 and 57-77; these read PIISAASVIAAGLAVGLAAIG and LAFMESLTIYGLVVALSLLFA.

This sequence belongs to the ATPase C chain family. F-type ATPases have 2 components, F(1) - the catalytic core - and F(0) - the membrane proton channel. F(1) has five subunits: alpha(3), beta(3), gamma(1), delta(1), epsilon(1). F(0) has four main subunits: a(1), b(1), b'(1) and c(10-14). The alpha and beta chains form an alternating ring which encloses part of the gamma chain. F(1) is attached to F(0) by a central stalk formed by the gamma and epsilon chains, while a peripheral stalk is formed by the delta, b and b' chains.

It localises to the plastid. The protein localises to the chloroplast thylakoid membrane. F(1)F(0) ATP synthase produces ATP from ADP in the presence of a proton or sodium gradient. F-type ATPases consist of two structural domains, F(1) containing the extramembraneous catalytic core and F(0) containing the membrane proton channel, linked together by a central stalk and a peripheral stalk. During catalysis, ATP synthesis in the catalytic domain of F(1) is coupled via a rotary mechanism of the central stalk subunits to proton translocation. Its function is as follows. Key component of the F(0) channel; it plays a direct role in translocation across the membrane. A homomeric c-ring of between 10-14 subunits forms the central stalk rotor element with the F(1) delta and epsilon subunits. This chain is ATP synthase subunit c, chloroplastic, found in Cyanidium caldarium (Red alga).